The sequence spans 357 residues: Palmitoyltransferase ZDHHC20-A (357 aa).

Over 1–14 (MAPSHAVRCCQRGL) the chain is Cytoplasmic. A helical transmembrane segment spans residues 15-35 (SWIPVIFINLVVCWSYYAYVV). Residues 36 to 50 (ELCIYTIPNVNEQVI) lie on the Lumenal side of the membrane. The chain crosses the membrane as a helical span at residues 51–71 (YLVVFHAFFFMFMWSYWKTIS). Topologically, residues 72 to 166 (SKPTNPSKEF…NNCVGFSNYK (95 aa)) are cytoplasmic. Residues 123–173 (RYCDRCQLIKPDRCHHCSTCDKCVLKMDHHCPWVNNCVGFSNYKFFVLFLA) enclose the DHHC domain. Residue C153 is the S-palmitoyl cysteine intermediate of the active site. Residues 167-187 (FFVLFLAYSMLYCVYIAATVL) form a helical membrane-spanning segment. The Lumenal portion of the chain corresponds to 188 to 204 (QYFIKFWTNQLPDTHAK). The chain crosses the membrane as a helical span at residues 205-228 (FHVLFLFFVAAMFFISILSLFSYH). The Cytoplasmic portion of the chain corresponds to 229–357 (LWLVGKNRTT…PVCVTLENES (129 aa)).

Belongs to the DHHC palmitoyltransferase family.

Its subcellular location is the golgi apparatus membrane. It localises to the cell membrane. The protein localises to the cytoplasm. The protein resides in the perinuclear region. It is found in the endoplasmic reticulum membrane. Its subcellular location is the endoplasmic reticulum-Golgi intermediate compartment membrane. It carries out the reaction L-cysteinyl-[protein] + hexadecanoyl-CoA = S-hexadecanoyl-L-cysteinyl-[protein] + CoA. It catalyses the reaction L-cysteinyl-[protein] + tetradecanoyl-CoA = S-tetradecanoyl-L-cysteinyl-[protein] + CoA. The enzyme catalyses L-cysteinyl-[protein] + octadecanoyl-CoA = S-octadecanoyl-L-cysteinyl-[protein] + CoA. Its function is as follows. Palmitoyltransferase that could catalyze the addition of palmitate onto various protein substrates. Catalyzes palmitoylation of Cys residues on protein substrates and has a preference for acyl-CoA with C16 fatty acid chains but may also utilize acyl-CoA with C14 and C18 fatty acid chains. In Danio rerio (Zebrafish), this protein is Palmitoyltransferase ZDHHC20-A.